A 311-amino-acid chain; its full sequence is 4-hydroxy-3-methylbut-2-enyl diphosphate reductase (311 aa).

C12 is a [4Fe-4S] cluster binding site. Positions 41 and 74 each coordinate (2E)-4-hydroxy-3-methylbut-2-enyl diphosphate. Residues H41 and H74 each contribute to the dimethylallyl diphosphate site. Positions 41 and 74 each coordinate isopentenyl diphosphate. C96 provides a ligand contact to [4Fe-4S] cluster. Residue H124 coordinates (2E)-4-hydroxy-3-methylbut-2-enyl diphosphate. Dimethylallyl diphosphate is bound at residue H124. H124 provides a ligand contact to isopentenyl diphosphate. E126 functions as the Proton donor in the catalytic mechanism. T167 contributes to the (2E)-4-hydroxy-3-methylbut-2-enyl diphosphate binding site. C197 serves as a coordination point for [4Fe-4S] cluster. S225, S226, N227, and S269 together coordinate (2E)-4-hydroxy-3-methylbut-2-enyl diphosphate. S225, S226, N227, and S269 together coordinate dimethylallyl diphosphate. Positions 225, 226, 227, and 269 each coordinate isopentenyl diphosphate.

This sequence belongs to the IspH family. The cofactor is [4Fe-4S] cluster.

It carries out the reaction isopentenyl diphosphate + 2 oxidized [2Fe-2S]-[ferredoxin] + H2O = (2E)-4-hydroxy-3-methylbut-2-enyl diphosphate + 2 reduced [2Fe-2S]-[ferredoxin] + 2 H(+). The enzyme catalyses dimethylallyl diphosphate + 2 oxidized [2Fe-2S]-[ferredoxin] + H2O = (2E)-4-hydroxy-3-methylbut-2-enyl diphosphate + 2 reduced [2Fe-2S]-[ferredoxin] + 2 H(+). It functions in the pathway isoprenoid biosynthesis; dimethylallyl diphosphate biosynthesis; dimethylallyl diphosphate from (2E)-4-hydroxy-3-methylbutenyl diphosphate: step 1/1. The protein operates within isoprenoid biosynthesis; isopentenyl diphosphate biosynthesis via DXP pathway; isopentenyl diphosphate from 1-deoxy-D-xylulose 5-phosphate: step 6/6. Its function is as follows. Catalyzes the conversion of 1-hydroxy-2-methyl-2-(E)-butenyl 4-diphosphate (HMBPP) into a mixture of isopentenyl diphosphate (IPP) and dimethylallyl diphosphate (DMAPP). Acts in the terminal step of the DOXP/MEP pathway for isoprenoid precursor biosynthesis. The chain is 4-hydroxy-3-methylbut-2-enyl diphosphate reductase from Aeromonas hydrophila subsp. hydrophila (strain ATCC 7966 / DSM 30187 / BCRC 13018 / CCUG 14551 / JCM 1027 / KCTC 2358 / NCIMB 9240 / NCTC 8049).